Here is a 408-residue protein sequence, read N- to C-terminus: Serine/threonine transporter SstT (408 aa).

The next 10 helical transmembrane spans lie at 15–35 (MGLI…AVIW), 49–69 (FISA…TAAI), 85–105 (LLYV…SFVF), 142–162 (ALME…GLML), 192–212 (PLGI…GALL), 218–238 (LAVI…LIVF), 246–268 (YPLV…SSAA), 289–309 (ISIP…ISVI), 317–337 (LGIP…SIAA), and 362–382 (TEVA…QDST).

The protein belongs to the dicarboxylate/amino acid:cation symporter (DAACS) (TC 2.A.23) family.

Its subcellular location is the cell inner membrane. The catalysed reaction is L-serine(in) + Na(+)(in) = L-serine(out) + Na(+)(out). It carries out the reaction L-threonine(in) + Na(+)(in) = L-threonine(out) + Na(+)(out). In terms of biological role, involved in the import of serine and threonine into the cell, with the concomitant import of sodium (symport system). This Marinobacter nauticus (strain ATCC 700491 / DSM 11845 / VT8) (Marinobacter aquaeolei) protein is Serine/threonine transporter SstT.